We begin with the raw amino-acid sequence, 196 residues long: Protein/nucleic acid deglycase 3 (196 aa).

Cys-106 functions as the Nucleophile in the catalytic mechanism. Position 106 is a cysteine sulfinic acid (-SO2H); alternate (Cys-106).

The protein belongs to the peptidase C56 family. As to quaternary structure, homodimer. In terms of processing, cys-106 is easily oxidized to sulfinic acid.

It catalyses the reaction N(omega)-(1-hydroxy-2-oxopropyl)-L-arginyl-[protein] + H2O = lactate + L-arginyl-[protein] + H(+). The enzyme catalyses N(6)-(1-hydroxy-2-oxopropyl)-L-lysyl-[protein] + H2O = lactate + L-lysyl-[protein] + H(+). It carries out the reaction S-(1-hydroxy-2-oxopropyl)-L-cysteinyl-[protein] + H2O = lactate + L-cysteinyl-[protein] + H(+). The catalysed reaction is N(omega)-(1-hydroxy-2-oxoethyl)-L-arginyl-[protein] + H2O = L-arginyl-[protein] + glycolate + H(+). It catalyses the reaction N(6)-(1-hydroxy-2-oxoethyl)-L-lysyl-[protein] + H2O = glycolate + L-lysyl-[protein] + H(+). The enzyme catalyses S-(1-hydroxy-2-oxoethyl)-L-cysteinyl-[protein] + H2O = glycolate + L-cysteinyl-[protein] + H(+). It carries out the reaction N(2)-(1-hydroxy-2-oxopropyl)-dGTP + H2O = lactate + dGTP + H(+). The catalysed reaction is N(2)-(1-hydroxy-2-oxopropyl)-GTP + H2O = lactate + GTP + H(+). It catalyses the reaction N(2)-(1-hydroxy-2-oxopropyl)-GDP + H2O = lactate + GDP + H(+). The enzyme catalyses N(2)-(1-hydroxy-2-oxopropyl)-GMP + H2O = lactate + GMP + H(+). It carries out the reaction N(2)-(1-hydroxy-2-oxoethyl)-dGTP + H2O = dGTP + glycolate + H(+). The catalysed reaction is N(2)-(1-hydroxy-2-oxoethyl)-GTP + H2O = glycolate + GTP + H(+). It catalyses the reaction N(2)-(1-hydroxy-2-oxoethyl)-GDP + H2O = glycolate + GDP + H(+). The enzyme catalyses N(2)-(1-hydroxy-2-oxoethyl)-GMP + H2O = glycolate + GMP + H(+). It carries out the reaction an N(2)-(1-hydroxy-2-oxopropyl)-guanosine in RNA + H2O = a guanosine in RNA + lactate + H(+). The catalysed reaction is an N(2)-(1-hydroxy-2-oxopropyl)-2'-deoxyguanosine in DNA + H2O = a 2'-deoxyguanosine in DNA + lactate + H(+). It catalyses the reaction an N(2)-(1-hydroxy-2-oxoethyl)-guanosine in RNA + H2O = a guanosine in RNA + glycolate + H(+). The enzyme catalyses an N(2)-(1-hydroxy-2-oxoethyl)-2'-deoxyguanosine in DNA + H2O = a 2'-deoxyguanosine in DNA + glycolate + H(+). With respect to regulation, glyoxalase activity is inhibited by zinc ions. Active as a chaperone in both its reduced and oxidized states, and is more active in its oxidized form. Its function is as follows. Protein and nucleotide deglycase that catalyzes the deglycation of the Maillard adducts formed between amino groups of proteins or nucleotides and reactive carbonyl groups of glyoxals. Thus, functions as a protein deglycase that repairs methylglyoxal- and glyoxal-glycated proteins, and releases repaired proteins and lactate or glycolate, respectively. Deglycates cysteine, arginine and lysine residues in proteins, and thus reactivates these proteins by reversing glycation by glyoxals. Is able to repair glycated serum albumin, collagen, glyceraldehyde-3-phosphate dehydrogenase, and fructose biphosphate aldolase. Acts on early glycation intermediates (hemithioacetals and aminocarbinols), preventing the formation of Schiff bases and advanced glycation endproducts (AGE) that cause irreversible damage. Also functions as a nucleotide deglycase able to repair glycated guanine in the free nucleotide pool (GTP, GDP, GMP, dGTP) and in DNA and RNA. Is thus involved in a major nucleotide repair system named guanine glycation repair (GG repair), dedicated to reversing methylglyoxal and glyoxal damage via nucleotide sanitization and direct nucleic acid repair. However, is less efficient than Hsp31 and YhbO, suggesting that YajL might be preferentially dedicated to protein repair. Displays a covalent chaperone activity with sulfenylated thiol proteins by forming mixed disulfides with members of the thiol proteome, and preferentially with sulfenylated cellular proteins, upon oxidative stress; these mixed disulfides can be subsequently reduced by low-molecular-weight thiols to regenerate YajL and reduced proteins. Involved in biogenesis of ribosomal proteins, probably as a ribosomal protein-folding chaperone. Confers resistance to oxidative stress. Plays an important role in protection against electrophile/carbonyl stress. The chaperone activity reported for YajL is probably recruited to execute its deglycase activity, to interact with non-native glycated proteins and gain access to partially buried glycated sites. Also displays an apparent glyoxalase activity that in fact reflects its deglycase activity. The polypeptide is Protein/nucleic acid deglycase 3 (yajL) (Escherichia coli (strain K12)).